The following is a 98-amino-acid chain: 10 kDa chaperonin, mitochondrial (98 aa).

The N-terminal 17 residues, 1–17, are a transit peptide targeting the mitochondrion; sequence MMKRLIPTFNRILVQRV. Residues 18–94 are cpn-10 domain; it reads IQPAKTESGI…LFRDEDVLGT (77 aa).

It belongs to the GroES chaperonin family. Forms stable complexes with CPN60 in the presence of ATP.

Its subcellular location is the mitochondrion. Seems to function only as a co-chaperone, along with CPN60, and in certain cases is essential for the discharge of biologically active proteins from CPN60. The chain is 10 kDa chaperonin, mitochondrial (CPN10) from Arabidopsis thaliana (Mouse-ear cress).